Consider the following 1254-residue polypeptide: Ubiquitin carboxyl-terminal hydrolase 12 (1254 aa).

S84 carries the post-translational modification Phosphoserine. One can recognise a DUSP domain in the interval 97-199 (NVLEQQRDVV…GSYPVVTNLV (103 aa)). Residues 364 to 1110 (TGLVNLGNTC…SAYLLFYIRR (747 aa)) enclose the USP domain. Residue C373 is the Nucleophile of the active site. The disordered stretch occupies residues 827 to 893 (DEGDTEGSEA…EPELTDKPEA (67 aa)). Positions 854-864 (TVTNNENVNNT) are enriched in low complexity. Residues 867–883 (RDEDMELTDDVEEDAST) show a composition bias toward acidic residues. Residue H1068 is the Proton acceptor of the active site. S1160 bears the Phosphoserine mark. The segment at 1188-1207 (QDCNDEDDNDDGERTNSGRR) is disordered. Residues 1189 to 1198 (DCNDEDDNDD) are compositionally biased toward acidic residues.

This sequence belongs to the peptidase C19 family. Interacts with FZO1.

It catalyses the reaction Thiol-dependent hydrolysis of ester, thioester, amide, peptide and isopeptide bonds formed by the C-terminal Gly of ubiquitin (a 76-residue protein attached to proteins as an intracellular targeting signal).. Its function is as follows. Ubiquitin carboxyl-terminal hydrolase that recognizes ubiquitin chains that stabilize FZO1 and promote mitochondrial fusion. UBP12 deubiquitylates FZO1 only after oligomerization. The polypeptide is Ubiquitin carboxyl-terminal hydrolase 12 (UBP12) (Saccharomyces cerevisiae (strain ATCC 204508 / S288c) (Baker's yeast)).